The sequence spans 417 residues: Voltage-gated ClC-type chloride channel ClcB (417 aa).

The next 11 helical transmembrane spans lie at 5–25 (LLIATIIGILAALAVAGFRHA), 54–74 (LITPAVGGLAAGALLWGWQKM), 146–166 (LWIACGAAAGMASAYHAPLAG), 168–188 (LFIAEILFGTLMLASLGPVVI), 190–210 (AVVALLTTHLLSGGNALLYTV), 222–242 (AMIISTGLVAGVCGPLFMWLM), 258–278 (WQLALGGFIVGLLSLLTPAVW), 288–308 (FLLSPPLLSVIAGIFICKLLA), 316–336 (GAPGGVFTPTLFIGLSIGMLY), 339–359 (MWGFWLPGADEMAILLGLTGM), and 380–400 (MTGEYRLLPGLLIACVVASVL).

Belongs to the chloride channel (TC 2.A.49) family. ClcB subfamily.

Its subcellular location is the cell inner membrane. Functionally, probably acts as an electrical shunt for an outwardly-directed proton pump that is linked to amino acid decarboxylation, as part of the extreme acid resistance (XAR) response. The polypeptide is Voltage-gated ClC-type chloride channel ClcB (Citrobacter koseri (strain ATCC BAA-895 / CDC 4225-83 / SGSC4696)).